Reading from the N-terminus, the 63-residue chain is MDPQDCTCAAGDSCSCAGSCKCKNCRCRSCRKSCCSCCPAGCNNCAKGCVCKEPASSKCSCCH.

Positions 1-30 are beta; sequence MDPQDCTCAAGDSCSCAGSCKCKNCRCRSC. The a divalent metal cation site is built by Cys6, Cys8, Cys14, Cys16, Cys20, Cys22, Cys25, Cys27, Cys30, Cys34, Cys35, Cys37, Cys38, Cys42, Cys45, Cys49, Cys51, Cys59, Cys61, and Cys62. The tract at residues 31 to 63 is alpha; sequence RKSCCSCCPAGCNNCAKGCVCKEPASSKCSCCH.

Belongs to the metallothionein superfamily. Type 1 family.

In terms of biological role, metallothioneins have a high content of cysteine residues that bind various heavy metals. This Anas platyrhynchos (Mallard) protein is Metallothionein.